The chain runs to 479 residues: PRAME family member 19 (479 aa).

One copy of the LRR 1 repeat lies at 15–38 (QSLLRDQALAISVLDELPRELFPR). The LRR 1; degenerate repeat unit spans residues 97 to 124 (RWKLQVLEMRDVDENFWTIWSGARPLSC). One copy of the LRR 2; degenerate repeat lies at 179-203 (HLCCTKVVNYSMNILNFRNILETVY). Residues 204–230 (PDSIQVLEIWNMCWPCMVAEVSRYLSQ) form an LRR 3; degenerate repeat. The LRR 4; degenerate repeat unit spans residues 231 to 265 (MKNLRKLFISDGCGYLPSFESQGQLVAEFSSVFLR). 5 LRR repeats span residues 266–291 (LEYL…IRCL), 292–323 (KSPL…SQLK), 324–342 (QLNL…PLRA), 348–375 (AATL…ALSR), and 376–400 (CSNL…LLRH).

It belongs to the PRAME family.

This chain is PRAME family member 19, found in Homo sapiens (Human).